The sequence spans 121 residues: Acid shock protein (121 aa).

A signal peptide spans 1–21 (MKKVLALMVAATLGLSSVAFA). Positions 22 to 63 (ADTTATATPAATSTTATVAAQTKATQHQKHKVTKKTTEQKAQ) are excised as a propeptide. The tract at residues 40–121 (AAQTKATQHQ…AKKPVAAPAA (82 aa)) is disordered. The segment covering 74–83 (VQKAPVQKAQ) has biased composition (low complexity). Basic residues predominate over residues 84–93 (AAKKHVKKAS). Over residues 94 to 103 (VQKAPVQKAQ) the composition is skewed to low complexity. Residues 104 to 113 (AAKKHHKTAK) are compositionally biased toward basic residues.

Belongs to the Asr family. Post-translationally, proteolytic processing gives rise to the active protein.

The protein resides in the periplasm. In terms of biological role, required for growth and/or survival at acidic conditions. This chain is Acid shock protein, found in Yersinia pseudotuberculosis serotype O:1b (strain IP 31758).